Here is a 110-residue protein sequence, read N- to C-terminus: Large ribosomal subunit protein uL22 (110 aa).

This sequence belongs to the universal ribosomal protein uL22 family. Part of the 50S ribosomal subunit.

This protein binds specifically to 23S rRNA; its binding is stimulated by other ribosomal proteins, e.g. L4, L17, and L20. It is important during the early stages of 50S assembly. It makes multiple contacts with different domains of the 23S rRNA in the assembled 50S subunit and ribosome. In terms of biological role, the globular domain of the protein is located near the polypeptide exit tunnel on the outside of the subunit, while an extended beta-hairpin is found that lines the wall of the exit tunnel in the center of the 70S ribosome. The sequence is that of Large ribosomal subunit protein uL22 from Buchnera aphidicola subsp. Acyrthosiphon pisum (strain 5A).